We begin with the raw amino-acid sequence, 591 residues long: V-type ATP synthase alpha chain (591 aa).

233–240 (GPFGAGKT) serves as a coordination point for ATP.

This sequence belongs to the ATPase alpha/beta chains family.

It carries out the reaction ATP + H2O + 4 H(+)(in) = ADP + phosphate + 5 H(+)(out). Functionally, produces ATP from ADP in the presence of a proton gradient across the membrane. The V-type alpha chain is a catalytic subunit. The protein is V-type ATP synthase alpha chain of Streptococcus pyogenes serotype M2 (strain MGAS10270).